Consider the following 217-residue polypeptide: Thiamine-phosphate synthase (217 aa).

Residues 42 to 46 and Asp77 contribute to the 4-amino-2-methyl-5-(diphosphooxymethyl)pyrimidine site; that span reads QYRDK. Asp78 and Asp97 together coordinate Mg(2+). Ser116 is a 4-amino-2-methyl-5-(diphosphooxymethyl)pyrimidine binding site. Residue 143–145 coordinates 2-[(2R,5Z)-2-carboxy-4-methylthiazol-5(2H)-ylidene]ethyl phosphate; sequence TTS. Residue Lys146 coordinates 4-amino-2-methyl-5-(diphosphooxymethyl)pyrimidine. 2-[(2R,5Z)-2-carboxy-4-methylthiazol-5(2H)-ylidene]ethyl phosphate is bound by residues Gly174 and 194 to 195; that span reads IS.

This sequence belongs to the thiamine-phosphate synthase family. Mg(2+) is required as a cofactor.

The catalysed reaction is 2-[(2R,5Z)-2-carboxy-4-methylthiazol-5(2H)-ylidene]ethyl phosphate + 4-amino-2-methyl-5-(diphosphooxymethyl)pyrimidine + 2 H(+) = thiamine phosphate + CO2 + diphosphate. It catalyses the reaction 2-(2-carboxy-4-methylthiazol-5-yl)ethyl phosphate + 4-amino-2-methyl-5-(diphosphooxymethyl)pyrimidine + 2 H(+) = thiamine phosphate + CO2 + diphosphate. It carries out the reaction 4-methyl-5-(2-phosphooxyethyl)-thiazole + 4-amino-2-methyl-5-(diphosphooxymethyl)pyrimidine + H(+) = thiamine phosphate + diphosphate. The protein operates within cofactor biosynthesis; thiamine diphosphate biosynthesis; thiamine phosphate from 4-amino-2-methyl-5-diphosphomethylpyrimidine and 4-methyl-5-(2-phosphoethyl)-thiazole: step 1/1. In terms of biological role, condenses 4-methyl-5-(beta-hydroxyethyl)thiazole monophosphate (THZ-P) and 2-methyl-4-amino-5-hydroxymethyl pyrimidine pyrophosphate (HMP-PP) to form thiamine monophosphate (TMP). This Lactiplantibacillus plantarum (strain ATCC BAA-793 / NCIMB 8826 / WCFS1) (Lactobacillus plantarum) protein is Thiamine-phosphate synthase.